The primary structure comprises 276 residues: Rhomboid protease GlpG (276 aa).

6 consecutive transmembrane segments (helical) span residues 94 to 114, 142 to 162, 169 to 189, 192 to 212, 229 to 249, and 250 to 270; these read GPVT…MSLI, IFMH…WYLG, LGSG…GYVQ, FSGP…GYVW, LIIF…GMSM, and ANGA…VDTL. Residue Ser201 is the Nucleophile of the active site. His254 is an active-site residue.

The protein belongs to the peptidase S54 family.

Its subcellular location is the cell inner membrane. The catalysed reaction is Cleaves type-1 transmembrane domains using a catalytic dyad composed of serine and histidine that are contributed by different transmembrane domains.. In terms of biological role, rhomboid-type serine protease that catalyzes intramembrane proteolysis. This is Rhomboid protease GlpG from Salmonella agona (strain SL483).